The following is a 345-amino-acid chain: V-type proton ATPase subunit d (345 aa).

Position 1 is an N-acetylmethionine (methionine 1).

This sequence belongs to the V-ATPase V0D/AC39 subunit family. As to quaternary structure, V-ATPase is a heteromultimeric enzyme composed of a peripheral catalytic V1 complex (components A to H) attached to an integral membrane V0 proton pore complex (components: a, c, c', c'', d, e, f and VOA1).

The protein resides in the vacuole membrane. In terms of biological role, subunit of the V0 complex of vacuolar(H+)-ATPase (V-ATPase), a multisubunit enzyme composed of a peripheral complex (V1) that hydrolyzes ATP and a membrane integral complex (V0) that translocates protons. V-ATPase is responsible for acidifying and maintaining the pH of intracellular compartments. This subunit is a non-integral membrane component of the membrane pore domain and is required for proper assembly of the V0 sector. Might be involved in the regulated assembly of V1 subunits onto the membrane sector or alternatively may prevent the passage of protons through V0 pores. The protein is V-type proton ATPase subunit d of Saccharomyces cerevisiae (strain ATCC 204508 / S288c) (Baker's yeast).